The following is a 190-amino-acid chain: Thioredoxin F-type, chloroplastic (190 aa).

Residues 1 to 31 (MALHLSLSHQSWTSPAHPITSSDPTRSSVPG) form a disordered region. Residues 1–77 (MALHLSLSHQ…SMEQALGTQE (77 aa)) constitute a chloroplast transit peptide. Residues 7–30 (LSHQSWTSPAHPITSSDPTRSSVP) are compositionally biased toward polar residues. The region spanning 78–189 (MEAIVGKVTE…LLEAIQAARS (112 aa)) is the Thioredoxin domain. Residues Cys-114 and Cys-117 each act as nucleophile in the active site. Cys-114 and Cys-117 are joined by a disulfide.

The protein belongs to the thioredoxin family. Plant F-type subfamily. In terms of assembly, forms a complex with heterodimeric ferredoxin-thioredoxin reductase (FTR) and ferredoxin.

It localises to the plastid. The protein resides in the chloroplast. Its function is as follows. Participates in various redox reactions through the reversible oxidation of the active center dithiol to a disulfide. The F form is known to activate a number of enzymes of the photosynthetic carbon cycle. The polypeptide is Thioredoxin F-type, chloroplastic (Spinacia oleracea (Spinach)).